Consider the following 239-residue polypeptide: Lysophospholipase-like protein 1 (239 aa).

Alanine 2 is subject to N-acetylalanine. Residues serine 125, aspartate 180, and histidine 212 each act as charge relay system in the active site.

This sequence belongs to the AB hydrolase superfamily. AB hydrolase 2 family.

The protein resides in the cytoplasm. The protein localises to the cytosol. It catalyses the reaction S-hexadecanoyl-L-cysteinyl-[protein] + H2O = L-cysteinyl-[protein] + hexadecanoate + H(+). Palmitoyl thioesterase that catalyzes depalmitoylation of CGAS and KCNMA1. Acts as a regulator of innate immunity by mediating depalmitoylation of CGAS, thereby preventing CGAS homodimerization and cyclic GMP-AMP synthase activity. Does not exhibit phospholipase nor triacylglycerol lipase activity, able to hydrolyze only short chain substrates due to its shallow active site. This is Lysophospholipase-like protein 1 from Mus musculus (Mouse).